The primary structure comprises 235 residues: 1-(5-phosphoribosyl)-5-[(5-phosphoribosylamino)methylideneamino] imidazole-4-carboxamide isomerase (235 aa).

Aspartate 8 acts as the Proton acceptor in catalysis. The Proton donor role is filled by aspartate 127.

Belongs to the HisA/HisF family.

It is found in the cytoplasm. The enzyme catalyses 1-(5-phospho-beta-D-ribosyl)-5-[(5-phospho-beta-D-ribosylamino)methylideneamino]imidazole-4-carboxamide = 5-[(5-phospho-1-deoxy-D-ribulos-1-ylimino)methylamino]-1-(5-phospho-beta-D-ribosyl)imidazole-4-carboxamide. It functions in the pathway amino-acid biosynthesis; L-histidine biosynthesis; L-histidine from 5-phospho-alpha-D-ribose 1-diphosphate: step 4/9. This chain is 1-(5-phosphoribosyl)-5-[(5-phosphoribosylamino)methylideneamino] imidazole-4-carboxamide isomerase, found in Aliarcobacter butzleri (strain RM4018) (Arcobacter butzleri).